Reading from the N-terminus, the 1578-residue chain is MKHYYRLLFLLLFPLLASAQPAHGKKVVGYYAQWSIYARDFNVPKIDGSKLTHLNYSFYGTTYDPAHPENTKLKCLDTYADFEHMEGGIPWDAPVKGNFYDLMKLKQKYPHLKILISVGGWTKGQDLSPIAASPVARAALAADMANFIVTYPFIDGFDIDWEYPLSGGTDGTEIVNGMPVPPQKYSPDDNKNLVLLLKAMRQAMPNKLVTIAAGNNVRNVSKQYLGPNNRAQYGMTEDISTYCDYITYFGYDFGGNWYDKTCYNAPLYASGNPNDPLYGATQSESLDELTNQYLNVIGFPANKLIMGLPFYGKKFDNVAANSTNGLFVAAPRYIVPGCTNPQNPTGTWDGSGACEKSGSIEICDLVGNPVTNSHAYLDPNTMMVTPSAASAGWVRYFDNTTKVPYLYNSTLKQFISYEDKQSMDLKVQYIKSRNLAGGMIWELSQDTRGSIPNSLLNQVDTSFGSVVPGTVSISGSVKNGSALVTDVTVELRNASNAVIQTVVSANGNFAFNNLTSGQNYSLTALKATYTFTPVTLVNVTVNQTAVVINGTQPTYTVSGTVLDGSTPVSGVTVTAVSGSTTLTAVSNASGVYSIAGLTAGLNFTVTAAKSGFSYAPASTVYNAIDSNKTLNFTQGAPVVNYTVSGTVLNSTTPVSGVTVTASFTGGSYAAVTNASGTYSLSLPSGGNYTVTAALTGQTFTPASTVYSNLNANKTLNFTQDVVVSTSKISGTVKNGTNPVAGAKVELVLPWTDNTHNWKSVIATTDAQGKYSFDNSVVDGYTQVLSLKLNSWQNGEVAYYPNNLANFAVPANPTVYNFNTSSTAKSALAAAANLISGTVKNGTTPVAGAKVEIVLPWTDNTHNWKSVLATTDASGNYSFDNSVVAGYTQILSLKLNGWENGDVTYYPNNLANFAVPTTPTIYNFNRQAVVATKPVVTITAPTASAIAINLGSAINFVASVGLSAVDATTISSVVFSLDGQSLSTANSSGTYTAAWTPAANQFSLSHTLTVTATASNGTTDSKTYSFTLTCSGANCPNALPVITWNSPSNTTVYQNTFQVVPISVTAVDSDGTVSGVTITINGGTFNMTAGTNNTYTYNFTPSAYQDYPVVIKATDNKSGVTTLNNTIKIATVSTNRFIPLPSKIILGYAHSWENAGAPFLYFSQMVGSKFNVVDYSFVETVNRDGYTPILTTNDTRYLTNGVFNKQLLKNDIKSLRDSGVPVIVSIGGQNGHVVLDNVTQKNIFVNGLKAIIDEYQFDGVDIDFEGGSMNFNAGGLRDISYAGISAYPRLKNVVDAFKELKAYYGPGFLLTAAPETQYVQGGYTTYTDTFGSFLPIIQNLRNELDLLAVQLYNTGGENGLDGQYYGTAKKSNMVTALTDMVIKGYNIASTGMRFDGLPASKVLIALPACPSAAGSGYLTPTEGINAMHYLRTGTTFSGRTYTMQPGGPYPSLRGLMTWSVNWDASSCGNSSELSKAYAAYFASQTAAKTLVLDDISAKSNATIAYFKNNALSVTNENEDIAQVDVFNVLGQNLVSHRNVQNNKEVLLHNQSFSSKQLFLVVVTDKAGNKKSFKVMNFLN.

Residues 1–19 form the signal peptide; it reads MKHYYRLLFLLLFPLLASA. The GH18 1 domain occupies 25-466; sequence KKVVGYYAQW…NQVDTSFGSV (442 aa). Residues 26 to 446 are GH18N; sequence KVVGYYAQWS…GGMIWELSQD (421 aa). Chitin is bound by residues 92–93 and 119–122; these read DA and GGWT. Glutamate 162 serves as the catalytic Proton donor. Chitin-binding positions include tyrosine 163, 249 to 252, and tryptophan 441; that span reads FGYD. The 52-residue stretch at 485–536 folds into the CNA-B domain; the sequence is TDVTVELRNASNAVIQTVVSANGNFAFNNLTSGQNYSLTALKATYTFTPVTL. The segment at 1142-1462 is GH18C; the sequence is KIILGYAHSW…GLMTWSVNWD (321 aa). A GH18 2 domain is found at 1142–1483; that stretch reads KIILGYAHSW…KAYAAYFASQ (342 aa). Glutamate 1264 functions as the Proton donor in the catalytic mechanism. The CTD stretch occupies residues 1473-1578; sequence SKAYAAYFAS…KSFKVMNFLN (106 aa).

The protein belongs to the glycosyl hydrolase 18 family. Chitinase class II subfamily.

It localises to the secreted. The enzyme catalyses Random endo-hydrolysis of N-acetyl-beta-D-glucosaminide (1-&gt;4)-beta-linkages in chitin and chitodextrins.. Functionally, major extracellular chitinase, which is essential for chitin utilization. The protein is Chitinase ChiA (chiA) of Flavobacterium johnsoniae (strain ATCC 17061 / DSM 2064 / JCM 8514 / BCRC 14874 / CCUG 350202 / NBRC 14942 / NCIMB 11054 / UW101) (Cytophaga johnsonae).